The following is a 156-amino-acid chain: Small ribosomal subunit protein uS7 (156 aa).

Belongs to the universal ribosomal protein uS7 family. In terms of assembly, part of the 30S ribosomal subunit. Contacts proteins S9 and S11.

Its function is as follows. One of the primary rRNA binding proteins, it binds directly to 16S rRNA where it nucleates assembly of the head domain of the 30S subunit. Is located at the subunit interface close to the decoding center, probably blocks exit of the E-site tRNA. This Psychromonas ingrahamii (strain DSM 17664 / CCUG 51855 / 37) protein is Small ribosomal subunit protein uS7.